The following is a 304-amino-acid chain: Ribosomal protein L11 methyltransferase (304 aa).

Residues T147, G168, D190, and N238 each coordinate S-adenosyl-L-methionine.

It belongs to the methyltransferase superfamily. PrmA family.

The protein localises to the cytoplasm. It carries out the reaction L-lysyl-[protein] + 3 S-adenosyl-L-methionine = N(6),N(6),N(6)-trimethyl-L-lysyl-[protein] + 3 S-adenosyl-L-homocysteine + 3 H(+). Methylates ribosomal protein L11. In Prochlorococcus marinus (strain SARG / CCMP1375 / SS120), this protein is Ribosomal protein L11 methyltransferase.